Here is a 438-residue protein sequence, read N- to C-terminus: Death-associated inhibitor of apoptosis 1 (438 aa).

The BIR 1 repeat unit spans residues 44 to 110 (EETRLKTFTD…QRWSPNCPLL (67 aa)). Positions 194-213 (TATQATGDVQPETCRPSAAS) are disordered. The stretch at 226–293 (ETARLRTFEA…ALWLSQCRFV (68 aa)) is one BIR 2 repeat. Zn(2+) contacts are provided by Cys-263, Cys-266, His-283, and Cys-290. The segment at 322 to 346 (GGVAVASTQASEEEQQTSLSSEEAV) is disordered. Residues 327-345 (ASTQASEEEQQTSLSSEEA) show a composition bias toward low complexity. The RING-type zinc finger occupies 391–426 (CKICYGAEYNTAFLPCGHVVACAKCASSVTKCPLCR).

The protein belongs to the IAP family. In terms of assembly, interacts (via BIR 2 domain) with Dronc (via residues 114-125). Rpr, hid and grim can outcompete Dronc for binding Diap1 therefore removing Diap1-mediated ubiquitination. Interacts (via BIR 2 domain) with HtrA2; this displaces any bound Dronc. Interacts with Strica. The N-terminally cleaved form interacts with Ubr3 (via UBR-type zinc finger); the interaction promotes the recruitment and uniquitination of substrate capases such as Dronc. Ubiquitinated and degraded by HtrA2 in apoptotic cells; proteolytic cleavage at specific sites in the BIR domain linker region generating inactive fragments. Mutation of one site reduces but does not abolish cleavage as another site is selected by the protease.

The catalysed reaction is S-ubiquitinyl-[E2 ubiquitin-conjugating enzyme]-L-cysteine + [acceptor protein]-L-lysine = [E2 ubiquitin-conjugating enzyme]-L-cysteine + N(6)-ubiquitinyl-[acceptor protein]-L-lysine.. Anti-apoptotic protein which functions as a caspase regulator, using its E3 ubiquitin-protein ligase activity to smother caspase activity. Binds, ubiquitinates and inactivates initiator caspase Dronc, and effector caspases Drice and Dcp-1. Acts as a Nedd8-E3 ubiquitin-protein ligase for Drice. Suppresses apoptosis by targeting the apoptosome for ubiquitination and inactivation. Plays an important role in cell motility. Overexpression suppresses rpr and hid-dependent cell death in the eye. Interaction of Diap1 with Dronc is required to suppress Dronc-mediated cell death through Diap1-mediated ubiquitination of Dronc. Acts as a positive regulator of Wnt signaling. In Drosophila melanogaster (Fruit fly), this protein is Death-associated inhibitor of apoptosis 1 (Diap1).